Reading from the N-terminus, the 585-residue chain is ATP-dependent lipid A-core flippase (585 aa).

Transmembrane regions (helical) follow at residues F25–I45, W63–L83, I127–I146, L150–T170, Q250–L270, and Q277–L297. In terms of domain architecture, ABC transmembrane type-1 spans L26–R309. One can recognise an ABC transporter domain in the interval V341–M577. G375–T382 is a binding site for ATP.

It belongs to the ABC transporter superfamily. Lipid exporter (TC 3.A.1.106) family. As to quaternary structure, homodimer.

It localises to the cell inner membrane. It catalyses the reaction ATP + H2O + lipid A-core oligosaccharideSide 1 = ADP + phosphate + lipid A-core oligosaccharideSide 2.. Involved in lipopolysaccharide (LPS) biosynthesis. Translocates lipid A-core from the inner to the outer leaflet of the inner membrane. Transmembrane domains (TMD) form a pore in the inner membrane and the ATP-binding domain (NBD) is responsible for energy generation. The protein is ATP-dependent lipid A-core flippase of Dechloromonas aromatica (strain RCB).